Here is a 123-residue protein sequence, read N- to C-terminus: Ribonuclease P protein component 1 (123 aa).

Residues 73–93 are disordered; sequence PDNGVGTAFKPAGGETRQTTG.

The protein belongs to the eukaryotic/archaeal RNase P protein component 1 family. As to quaternary structure, consists of a catalytic RNA component and at least 4-5 protein subunits.

The protein localises to the cytoplasm. It catalyses the reaction Endonucleolytic cleavage of RNA, removing 5'-extranucleotides from tRNA precursor.. Functionally, part of ribonuclease P, a protein complex that generates mature tRNA molecules by cleaving their 5'-ends. In Halobacterium salinarum (strain ATCC 29341 / DSM 671 / R1), this protein is Ribonuclease P protein component 1.